The chain runs to 422 residues: Pre-B-cell leukemia transcription factor 2 (422 aa).

Residues 1 to 43 (MDEQGRLMQARGVGIPGHPIHGGPQTLTPHPMHEPPADNGEPR) form a disordered region. Basic and acidic residues predominate over residues 31-43 (PMHEPPADNGEPR). Residues 42-236 (PRKQDIGDIL…VMILRSRFLD (195 aa)) enclose the PBC domain. The interval 49–128 (DILQQIMTIT…EGVAGPEKGG (80 aa)) is PBC-A. Residues 131 to 236 (AAAAAAAAAS…VMILRSRFLD (106 aa)) are PBC-B. The homeobox DNA-binding region spans 237–299 (ARRKRRNFSK…NKRIRYKKNI (63 aa)). Disordered stretches follow at residues 319-341 (QGGH…GSFN) and 353-422 (QGLN…DTSN). Over residues 401–410 (VTPSSVTSPT) the composition is skewed to polar residues.

Belongs to the TALE/PBX homeobox family.

Its subcellular location is the nucleus. Functionally, transcriptional activator that binds the sequence 5'-ATCAATCAA-3'. The chain is Pre-B-cell leukemia transcription factor 2 from Xenopus tropicalis (Western clawed frog).